The chain runs to 30 residues: DVTFSLLGANTKSYAAFITNFRKDVASEKK.

This sequence belongs to the ribosome-inactivating protein family. Type 1 RIP subfamily. Post-translationally, glycosylated.

It carries out the reaction Endohydrolysis of the N-glycosidic bond at one specific adenosine on the 28S rRNA.. In terms of biological role, inactivates eukaryotic 60S ribosomal subunits. The protein is Ribosome-inactivating protein momorcochin-S of Momordica cochinchinensis (Spiny bitter cucumber).